We begin with the raw amino-acid sequence, 389 residues long: Zip homologous protein 3 (389 aa).

The segment at 6–43 (CNKCFNRKPPDGFFISSCFHIFCTKCAKADLAVCLICK) adopts an RING-type zinc-finger fold. Residues 123–164 (LAEATAWIQMAEKKLQASEEERVKAEREIEECQAKLKSMTNL) are a coiled coil. The disordered stretch occupies residues 366-389 (ISSQPGYLAQRKPINGRSFIGPAD).

Interacts with zhp-4; the interaction is required for their localization along paired chromosomes and stability, and for the formation of chiasma during meiotic recombination. As to expression, expressed througout the gonad (at protein level). Expressed in the germline.

It localises to the chromosome. Its function is as follows. Recruited co-dependently with zhp-4 to the synaptonemal complex between homologous chromosome pairs to regulate the formation and number of crossover events between homologs during meiotic recombination. In the early stages of pachytene, in complex with zhp-4, recruited by the zhp-1-zhp-2 heterodimer to designated crossover sites along the homolog pair to stabilize other pro-crossover factors such as rmh-1, msh-5 and cosa-1. This in turn facilitates crossover and promotes the formation of chiasma in each meiotic nucleus at the late pachytene stage of meiosis. Plays a role in the segregation of homologous chromosomes following the completion of crossovers. Together with him-14 and msh-5 plays a role in the activation of DNA damage-dependent apoptosis at the DNA damage checkpoint in pachytene cells. This is Zip homologous protein 3 from Caenorhabditis elegans.